A 500-amino-acid polypeptide reads, in one-letter code: Aspartyl/glutamyl-tRNA(Asn/Gln) amidotransferase subunit B (500 aa).

It belongs to the GatB/GatE family. GatB subfamily. In terms of assembly, heterotrimer of A, B and C subunits.

It carries out the reaction L-glutamyl-tRNA(Gln) + L-glutamine + ATP + H2O = L-glutaminyl-tRNA(Gln) + L-glutamate + ADP + phosphate + H(+). The enzyme catalyses L-aspartyl-tRNA(Asn) + L-glutamine + ATP + H2O = L-asparaginyl-tRNA(Asn) + L-glutamate + ADP + phosphate + 2 H(+). Allows the formation of correctly charged Asn-tRNA(Asn) or Gln-tRNA(Gln) through the transamidation of misacylated Asp-tRNA(Asn) or Glu-tRNA(Gln) in organisms which lack either or both of asparaginyl-tRNA or glutaminyl-tRNA synthetases. The reaction takes place in the presence of glutamine and ATP through an activated phospho-Asp-tRNA(Asn) or phospho-Glu-tRNA(Gln). The sequence is that of Aspartyl/glutamyl-tRNA(Asn/Gln) amidotransferase subunit B from Allorhizobium ampelinum (strain ATCC BAA-846 / DSM 112012 / S4) (Agrobacterium vitis (strain S4)).